Consider the following 7124-residue polypeptide: Replicase polyprotein 1ab (7124 aa).

The disordered stretch occupies residues 25–45 (SEKLGSPERSEEDGFCPSAAQ). The region spanning 54–196 (LINHVRVDCS…PWSILLRKGG (143 aa)) is the CoV Nsp1 globular domain. In terms of domain architecture, BetaCoV Nsp1 C-terminal spans 217–247 (FNVEDACEEVHLNPKGKYSRKAYALLKGYRG). Residues 251 to 511 (ILFLDQYGCD…TDAICRSLYM (261 aa)) enclose the CoV Nsp2 N-terminal domain. Cysteine 390, cysteine 395, cysteine 411, and cysteine 414 together coordinate Zn(2+). Positions 390–414 (CCGDACDFRGWVPGNMMDGFLCPGC) are C4. Positions 518–706 (CGNLEQRAIL…VDKFKVFFKV (189 aa)) constitute a CoV Nsp2 middle domain. The 107-residue stretch at 726–832 (SNRVCLAGCK…LDQCWRFPCA (107 aa)) folds into the CoV Nsp2 C-terminal domain. The 113-residue stretch at 834–946 (KKVEFNDKPK…MYCSFSAPDD (113 aa)) folds into the Ubiquitin-like 1 domain. The 238-residue stretch at 1031 to 1268 (AFDAIYSEAL…IAQLYGSCIT (238 aa)) folds into the Peptidase C16 1 domain. Cysteine 1068 serves as the catalytic For PL1-PRO activity. 4 residues coordinate Zn(2+): cysteine 1145, cysteine 1148, cysteine 1171, and cysteine 1173. The C4-type 1 zinc-finger motif lies at 1145 to 1173 (CLKCDMDLKLQGLDAMFFYGDVVSHVCKC). Residues histidine 1219 and aspartate 1230 each act as for PL1-PRO activity in the active site. The 161-residue stretch at 1269–1429 (PNVCFVKGDV…VIEKCQVTSI (161 aa)) folds into the Macro domain. The DPUP domain occupies 1484 to 1556 (DDARVFVQAH…VSQIRALLAN (73 aa)). The region spanning 1555–1610 (ANKVDVLCTVDGVNFRSCCVAEGEVFGKTLGSVFCDGINVTKVRCSAIHKGKVFFQ) is the Ubiquitin-like 2 domain. The Peptidase C16 2 domain occupies 1625-1884 (AFGFDEPQLL…CVEYNPDLSQ (260 aa)). Residue cysteine 1663 is the For PL2-PRO activity of the active site. 4 residues coordinate Zn(2+): cysteine 1741, cysteine 1743, cysteine 1775, and cysteine 1777. A C4-type 2 zinc finger spans residues 1741–1777 (CKCGVKQEQRKGVDAVMHFGTLDKGDLAKGYTIACTC). Active-site for PL2-PRO activity residues include histidine 1820 and aspartate 1834. The Nucleic acid-binding domain occupies 1898–1999 (IKAQFRTFEK…TYFNRPSVVC (102 aa)). In terms of domain architecture, G2M spans 2053 to 2202 (QVVSGFLSDL…TDNKVIYTTE (150 aa)). A run of 2 helical transmembrane segments spans residues 2232–2252 (FFLV…NVIL) and 2260–2280 (IGFF…TFGI). The HD1 stretch occupies residues 2232 to 2408 (FFLVATVFLL…FTLLRFYIVV (177 aa)). Residues 2268-2329 (GQIVAWVKTT…AINVVQHVVD (62 aa)) enclose the 3Ecto domain. Disulfide bonds link cysteine 2284/cysteine 2308 and cysteine 2299/cysteine 2305. Transmembrane regions (helical) follow at residues 2346 to 2366 (LVIG…LIGM) and 2388 to 2408 (FFVF…YIVV). The segment at 2416–2506 (CLCRHVMYGC…ELKRPVNPTD (91 aa)) is Y1. The CoV Nsp3 Y domain occupies 2416–2783 (CLCRHVMYGC…LTTPFSLKGG (368 aa)). 8 residues coordinate Zn(2+): histidine 2420, cysteine 2425, cysteine 2430, cysteine 2433, cysteine 2466, histidine 2469, cysteine 2473, and cysteine 2476. A ZF1 region spans residues 2420 to 2433 (HVMYGCSRPGCLFC). The segment at 2466-2476 (CAKHQWNCLNC) is ZF2. The Y2 stretch occupies residues 2507–2599 (SAYYLVTEVK…LVEKKLITTA (93 aa)). The segment at 2507–2783 (SAYYLVTEVK…LTTPFSLKGG (277 aa)) is coV-Y. The Y3 stretch occupies residues 2600 to 2682 (NTGLSVSQTM…KSIMSAVNAG (83 aa)). Residues 2683-2783 (VDFTDESCNN…LTTPFSLKGG (101 aa)) are Y4. Transmembrane regions (helical) follow at residues 2789–2809 (VLQW…ALMP), 2869–2889 (ACPV…FNVP), 3042–3062 (AFDL…FFAL), 3064–3084 (ASSV…YYLI), 3096–3116 (VVVI…VFQV), 3123–3143 (LYAC…SVVM), and 3148–3168 (LVMY…AVVV). The interval 2789–3168 (VLQWLFVVNL…FCIIYVAVVV (380 aa)) is HD2. Residues 3182 to 3279 (LGTEVRSDGT…TASVTTSFLQ (98 aa)) form the Nsp4C domain. Residues 3280–3582 (SGIVKMVFPT…YQQLAGVKLQ (303 aa)) enclose the Peptidase C30 domain. Catalysis depends on for 3CL-PRO activity residues histidine 3320 and cysteine 3424. The tract at residues 3525 to 3808 (LVLDALASMT…VCCCYWGVLS (284 aa)) is HD3. Helical transmembrane passes span 3591–3611 (GTCC…SAFV), 3621–3641 (THML…MLLV), 3647–3667 (YLTM…YLVV), 3690–3710 (TYMD…FVTM), 3717–3737 (VFSV…WYFG), 3744–3764 (VLLF…LSLA), and 3788–3808 (LVLL…GVLS). Residues 3870-3958 (SRLTDVKCVN…DYVRDSTVLQ (89 aa)) form the RdRp Nsp7 cofactor domain. Residues 3959–4155 (ALQSEFVNMA…HNEVSSVVLQ (197 aa)) enclose the RdRp Nsp8 cofactor domain. The 110-residue stretch at 4156-4265 (NNELMPQKLR…GTLSSTVRLQ (110 aa)) folds into the Nsp9 ssRNA-binding domain. Positions 4266-4403 (AGTATEYASN…CVGTGSQFQS (138 aa)) constitute an ExoN/MTase coactivator domain. Residues cysteine 4339, cysteine 4342, histidine 4348, cysteine 4355, cysteine 4381, cysteine 4384, cysteine 4392, and cysteine 4394 each contribute to the Zn(2+) site. 2 zinc fingers span residues 4339–4355 (CIYC…DGLC) and 4381–4394 (CQVC…SCSC). Positions 4408-4663 (FLNRVRGTSV…DSELFINGTY (256 aa)) constitute a NiRAN domain. The Mn(2+) site is built by asparagine 4611 and aspartate 4620. Residues 4664-4762 (REFDLVQYDF…MNMDVDTHRY (99 aa)) form the Nsp12 Interface domain. Histidine 4693, cysteine 4699, cysteine 4704, cysteine 4708, and cysteine 4885 together coordinate Zn(2+). One can recognise a Nsp12 RNA-dependent RNA polymerase domain in the interval 4763–5330 (RLSLKDLLLY…NMYLRSAVMQ (568 aa)). The segment at 4765 to 4979 (SLKDLLLYAA…HQKCLKSIAA (215 aa)) is rdRp Fingers N-ter. The interval 4980 to 5018 (TRGVPVVIGTTKFYGGWDDMLRRLIKDVDSPVLMGWDYP) is rdRp Palm N-ter. The RdRp catalytic domain maps to 5010–5172 (PVLMGWDYPK…CYNSEFASKG (163 aa)). The rdRp Fingers C-ter stretch occupies residues 5019-5077 (KCDRAMPNILRIISSLVLARKHDSCCSHTDRFYRLANECAQVLSEIVMCGGCYYVKPGG). Residues histidine 5040, cysteine 5043, and cysteine 5044 each contribute to the Zn(2+) site. A rdRp Palm C-ter region spans residues 5078–5213 (TSSGDATTAF…EKGPHEFCSQ (136 aa)). Catalysis depends on residues serine 5157, aspartate 5158, and aspartate 5159. The segment at 5214 to 5330 (HTMLVKMDGD…NMYLRSAVMQ (117 aa)) is rdRp Thumb. A CV ZBD domain is found at 5331–5443 (SVGACVVCSS…EDFNKIASCK (113 aa)). Zn(2+)-binding residues include cysteine 5335, cysteine 5338, cysteine 5346, cysteine 5349, cysteine 5356, cysteine 5359, histidine 5363, histidine 5369, cysteine 5380, cysteine 5385, cysteine 5402, and histidine 5405. Residues 5586–5767 (SVPETFQNNV…MCCLGPDIFL (182 aa)) enclose the (+)RNA virus helicase ATP-binding domain. 5611–5618 (GPPGTGKS) is an ATP binding site. The 170-residue stretch at 5768–5937 (GTCYRCPKEI…RLQCTTNLFK (170 aa)) folds into the (+)RNA virus helicase C-terminal domain. An ExoN domain is found at 6001-6216 (LFITRDEAIR…RCLAVHDCFC (216 aa)). Active-site residues include aspartate 6019, glutamate 6021, and glutamate 6120. The Zn(2+) site is built by cysteine 6136, cysteine 6139, cysteine 6155, histidine 6158, histidine 6186, cysteine 6190, and histidine 6193. Active-site residues include histidine 6197 and aspartate 6202. Cysteine 6208 contributes to the Zn(2+) binding site. The N7-MTase domain maps to 6225–6451 (YPIISNEVSV…NLWNTFTRLQ (227 aa)). 6260 to 6266 (DIGNPKG) is a binding site for S-adenosyl-L-methionine. The interval 6338-6352 (CNGGSLYVNKHAFHT) is gpppA-binding. Residues cysteine 6376, cysteine 6397, cysteine 6408, and histidine 6411 each contribute to the Zn(2+) site. The 61-residue stretch at 6452-6512 (SLENVVYNLV…NVAVELFAKR (61 aa)) folds into the Nsp15 N-terminal oligomerization domain. The 121-residue stretch at 6513-6633 (SIRPHPELKL…FAMRRDGDDV (121 aa)) folds into the AV-Nsp11N/CoV-Nsp15M domain. A NendoU domain is found at 6683-6822 (APRSEMEKDF…NEEKVMTFYP (140 aa)). Residues histidine 6713, histidine 6728, lysine 6768, lysine 6871, aspartate 6955, lysine 6995, and glutamate 7028 contribute to the active site. Residues 6827–7121 (AADWKPGYVM…KEVFVGDSLV (295 aa)) enclose the Nidovirus-type SAM-dependent 2'-O-MTase domain.

The protein belongs to the coronaviruses polyprotein 1ab family. As to quaternary structure, interacts with host PHB and PHB2. In terms of assembly, interacts with papain-like protease nsp3 and non-structural protein 6. Monomer. Homodimer. Only the homodimer shows catalytic activity. As to quaternary structure, interacts with nsp8 and nsp12 to form the replication-transcription complex (RTC): nsp12, nsp7, two subunits of nsp8, and up to two subunits of nsp13. In terms of assembly, interacts with nsp7, nsp13 and nsp12 to form the replication-transcription complex (RTC): nsp12, nsp7, two subunits of nsp8, and up to two subunits of nsp13. Interacts with nsp12. As to quaternary structure, interacts with proofreading exoribonuclease nsp14 and 2'-O-methyltransferase nsp16; these interactions enhance nsp14 and nsp16 enzymatic activities. In terms of assembly, interacts with nsp7 and nsp8 to form the replication-transcription complex (RTC): nsp12, nsp7, two subunits of nsp8, and up to two subunits of nsp13. Interacts with nsp9. Interacts with nsp8 to form the replication-transcription complex (RTC): nsp12, nsp7, two subunits of nsp8, and up to two subunits of nsp13. Requires Mn(2+) as cofactor. Mg(2+) is required as a cofactor. Post-translationally, specific enzymatic cleavages in vivo by its own proteases yield mature proteins. 3CL-PRO and PL-PRO proteinases are autocatalytically processed.

The protein resides in the host membrane. Its subcellular location is the host cytoplasm. It is found in the host perinuclear region. It localises to the host endoplasmic reticulum-Golgi intermediate compartment. The catalysed reaction is RNA(n) + a ribonucleoside 5'-triphosphate = RNA(n+1) + diphosphate. The enzyme catalyses ATP + H2O = ADP + phosphate + H(+). It catalyses the reaction Thiol-dependent hydrolysis of ester, thioester, amide, peptide and isopeptide bonds formed by the C-terminal Gly of ubiquitin (a 76-residue protein attached to proteins as an intracellular targeting signal).. It carries out the reaction a 5'-end (N(7)-methyl 5'-triphosphoguanosine)-ribonucleoside in mRNA + S-adenosyl-L-methionine = a 5'-end (N(7)-methyl 5'-triphosphoguanosine)-(2'-O-methyl-ribonucleoside) in mRNA + S-adenosyl-L-homocysteine + H(+). The catalysed reaction is uridylyl-uridylyl-ribonucleotide-RNA = a 3'-end uridylyl-2',3'-cyclophospho-uridine-RNA + a 5'-end dephospho-ribonucleoside-RNA. The enzyme catalyses a 5'-end diphospho-ribonucleoside in mRNA + GTP + H(+) = a 5'-end (5'-triphosphoguanosine)-ribonucleoside in mRNA + diphosphate. It catalyses the reaction a 5'-end (5'-triphosphoguanosine)-ribonucleoside in mRNA + S-adenosyl-L-methionine = a 5'-end (N(7)-methyl 5'-triphosphoguanosine)-ribonucleoside in mRNA + S-adenosyl-L-homocysteine. Functionally, the replicase polyprotein of coronaviruses is a multifunctional protein: it contains the activities necessary for the transcription of negative stranded RNA, leader RNA, subgenomic mRNAs and progeny virion RNA as well as proteinases responsible for the cleavage of the polyprotein into functional products. In terms of biological role, inhibits host translation by interacting with the 40S ribosomal subunit. The nsp1-40S ribosome complex further induces an endonucleolytic cleavage near the 5'UTR of host mRNAs, targeting them for degradation. Viral mRNAs are not susceptible to nsp1-mediated endonucleolytic RNA cleavage thanks to the presence of a 5'-end leader sequence and are therefore protected from degradation. By suppressing host gene expression, nsp1 facilitates efficient viral gene expression in infected cells and evasion from host immune response. Its function is as follows. May play a role in the modulation of host cell survival signaling pathway by interacting with host PHB and PHB2. Indeed, these two proteins play a role in maintaining the functional integrity of the mitochondria and protecting cells from various stresses. Responsible for the cleavages located at the N-terminus of the replicase polyprotein. In addition, PL-PRO possesses a deubiquitinating/deISGylating activity and processes both 'Lys-48'- and 'Lys-63'-linked polyubiquitin chains from cellular substrates. Participates together with nsp4 in the assembly of virally-induced cytoplasmic double-membrane vesicles necessary for viral replication. Antagonizes innate immune induction of type I interferon by blocking the phosphorylation, dimerization and subsequent nuclear translocation of host IRF3. Also prevents host NF-kappa-B signaling. Functionally, participates in the assembly of virally-induced cytoplasmic double-membrane vesicles necessary for viral replication. In terms of biological role, cleaves the C-terminus of replicase polyprotein at 11 sites. Recognizes substrates containing the core sequence [ILMVF]-Q-|-[SGACN]. Also able to bind an ADP-ribose-1''-phosphate (ADRP). Its function is as follows. Plays a role in the initial induction of autophagosomes from host endoplasmic reticulum. Later, limits the expansion of these phagosomes that are no longer able to deliver viral components to lysosomes. Forms a hexadecamer with nsp8 (8 subunits of each) that may participate in viral replication by acting as a primase. Alternatively, may synthesize substantially longer products than oligonucleotide primers. Functionally, forms a hexadecamer with nsp7 (8 subunits of each) that may participate in viral replication by acting as a primase. Alternatively, may synthesize substantially longer products than oligonucleotide primers. In terms of biological role, forms a primer, NSP9-pU, which is utilized by the polymerase for the initiation of RNA chains. Interacts with ribosome signal recognition particle RNA (SRP). Together with NSP8, suppress protein integration into the cell membrane, thereby disrupting host immune defenses. Its function is as follows. Plays a pivotal role in viral transcription by stimulating both nsp14 3'-5' exoribonuclease and nsp16 2'-O-methyltransferase activities. Therefore plays an essential role in viral mRNAs cap methylation. RNA-directed RNA polymerase that catalyzes the transcription of viral genomic and subgenomic RNAs. Acts in complex with nsp7 and nsp8 to transcribe both the minus and positive strands of genomic RNA. The kinase-like NiRAN domain of NSP12 attaches one or more nucleotides to the amino terminus of NSP9, forming a covalent RNA-protein intermediate that serves as transcription/replication primer. Subgenomic RNAs (sgRNAs) are formed by discontinuous transcription: The polymerase has the ability to pause at transcription-regulating sequences (TRS) and jump to the leader TRS, resulting in a major deletion. This creates a series of subgenomic RNAs that are replicated, transcribed and translated. In addition, Nsp12 is a subunit of the viral RNA capping enzyme that catalyzes the RNA guanylyltransferase reaction for genomic and sub-genomic RNAs. Subsequently, the NiRAN domain transfers RNA to GDP, and forms the core cap structure GpppA-RNA. Functionally, multi-functional protein with a zinc-binding domain in N-terminus displaying RNA and DNA duplex-unwinding activities with 5' to 3' polarity. Activity of helicase is dependent on magnesium. In terms of biological role, plays a role in viral RNA synthesis through two distinct activities. The N7-guanine methyltransferase activity plays a role in the formation of the cap structure GpppA-RNA. The proofreading exoribonuclease reduces the sensitivity of the virus to RNA mutagens during replication. This activity acts on both ssRNA and dsRNA in a 3'-5' direction. Its function is as follows. Plays a role in viral transcription/replication and prevents the simultaneous activation of host cell dsRNA sensors, such as MDA5/IFIH1, OAS, and PKR. Acts by degrading the 5'-polyuridines generated during replication of the poly(A) region of viral genomic and subgenomic RNAs. Catalyzes a two-step reaction in which a 2'3'-cyclic phosphate (2'3'-cP) is first generated by 2'-O transesterification, which is then hydrolyzed to a 3'-phosphate (3'-P). If not degraded, poly(U) RNA would hybridize with poly(A) RNA tails and activate host dsRNA sensors. Methyltransferase that mediates mRNA cap 2'-O-ribose methylation to the 5'-cap structure of viral mRNAs. N7-methyl guanosine cap is a prerequisite for binding of nsp16. Therefore plays an essential role in viral mRNAs cap methylation which is essential to evade immune system. The sequence is that of Replicase polyprotein 1ab (rep) from Murine coronavirus (strain 2) (MHV-2).